Here is a 495-residue protein sequence, read N- to C-terminus: Glucose-6-phosphate 1-dehydrogenase (495 aa).

Position 1 is an N-acetylserine (Ser-1). NADP(+) is bound by residues 15 to 22 (GASGDLAR), Arg-49, and Lys-149. Residues Lys-149, 179–183 (HYLGK), Glu-217, and Asp-236 contribute to the D-glucose 6-phosphate site. The active-site Proton acceptor is the His-241. An NADP(+)-binding site is contributed by Arg-332. Lys-335 contributes to the D-glucose 6-phosphate binding site. NADP(+) is bound by residues Lys-341, Arg-345, and Arg-367. Gln-369 is a binding site for D-glucose 6-phosphate. NADP(+) contacts are provided by residues 375–377 (YLK), 395–397 (DLT), and Lys-463.

Belongs to the glucose-6-phosphate dehydrogenase family.

It catalyses the reaction D-glucose 6-phosphate + NADP(+) = 6-phospho-D-glucono-1,5-lactone + NADPH + H(+). The protein operates within carbohydrate degradation; pentose phosphate pathway; D-ribulose 5-phosphate from D-glucose 6-phosphate (oxidative stage): step 1/3. Catalyzes the rate-limiting step of the oxidative pentose-phosphate pathway, which represents a route for the dissimilation of carbohydrates besides glycolysis. The main function of this enzyme is to provide reducing power (NADPH) and pentose phosphates for fatty acid and nucleic acid synthesis. The sequence is that of Glucose-6-phosphate 1-dehydrogenase from Cyberlindnera jadinii (Torula yeast).